Here is a 341-residue protein sequence, read N- to C-terminus: S-adenosylmethionine:tRNA ribosyltransferase-isomerase (341 aa).

This sequence belongs to the QueA family. In terms of assembly, monomer.

Its subcellular location is the cytoplasm. The enzyme catalyses 7-aminomethyl-7-carbaguanosine(34) in tRNA + S-adenosyl-L-methionine = epoxyqueuosine(34) in tRNA + adenine + L-methionine + 2 H(+). The protein operates within tRNA modification; tRNA-queuosine biosynthesis. Transfers and isomerizes the ribose moiety from AdoMet to the 7-aminomethyl group of 7-deazaguanine (preQ1-tRNA) to give epoxyqueuosine (oQ-tRNA). In Acetivibrio thermocellus (strain ATCC 27405 / DSM 1237 / JCM 9322 / NBRC 103400 / NCIMB 10682 / NRRL B-4536 / VPI 7372) (Clostridium thermocellum), this protein is S-adenosylmethionine:tRNA ribosyltransferase-isomerase.